The sequence spans 616 residues: UvrABC system protein C (616 aa).

Residues 21–99 (HQPGVYRMYD…IKLYLPKYNV (79 aa)) form the GIY-YIG domain. Residues 209–244 (RQVIASLVEKMEQASQSLNFEQAATFRDQIQALRRV) form the UVR domain.

Belongs to the UvrC family. In terms of assembly, interacts with UvrB in an incision complex.

The protein resides in the cytoplasm. Functionally, the UvrABC repair system catalyzes the recognition and processing of DNA lesions. UvrC both incises the 5' and 3' sides of the lesion. The N-terminal half is responsible for the 3' incision and the C-terminal half is responsible for the 5' incision. This is UvrABC system protein C from Photobacterium profundum (strain SS9).